Here is a 239-residue protein sequence, read N- to C-terminus: mRNA turnover protein 4 homolog (239 aa).

A disordered region spans residues 216-239 (QQMGDDLPESAPESEGESEEEDDS). The segment covering 221–239 (DLPESAPESEGESEEEDDS) has biased composition (acidic residues). Serine 225, serine 229, and serine 233 each carry phosphoserine.

Belongs to the universal ribosomal protein uL10 family. In terms of assembly, associates with the pre-60S ribosomal particle. Interacts with MINAS-60 (product of an alternative open reading frame of RBM10).

The protein resides in the nucleus. The protein localises to the nucleolus. Its subcellular location is the cytoplasm. Functionally, component of the ribosome assembly machinery. Nuclear paralog of the ribosomal protein P0, it binds pre-60S subunits at an early stage of assembly in the nucleolus, and is replaced by P0 in cytoplasmic pre-60S subunits and mature 80S ribosomes. The chain is mRNA turnover protein 4 homolog (MRTO4) from Bos taurus (Bovine).